The primary structure comprises 39 residues: Protein MchX (39 aa).

A helical membrane pass occupies residues 15–37; the sequence is SALSSTLLLSLIMSATLLEYSLS.

Its subcellular location is the cell inner membrane. Its function is as follows. Required for microcin H47 production. Possibly involved in a regulatory loop modulating its own expression and that of MchI and MchB. In Escherichia coli, this protein is Protein MchX (mchX).